The following is a 446-amino-acid chain: CBL-interacting serine/threonine-protein kinase 24 (446 aa).

Residues 11-264 (YEVGRTIGEG…IQGIKKDPWF (254 aa)) form the Protein kinase domain. ATP is bound by residues 17-25 (IGEGTFAKV) and lysine 40. Aspartate 134 (proton acceptor) is an active-site residue. An activation loop region spans residues 152–179 (DFGLSALPQEGVELLRTTCGTPNYVAPE). Serine 156 is modified (phosphoserine). Threonine 168 carries the post-translational modification Phosphothreonine. Positions 305–329 (EGPLMMNAFEMITLSQGLNLSALFD) constitute an NAF domain. The PPI stretch occupies residues 336–365 (KRQTRFVSRREPSEIIANIEAVANSMGFKS).

It belongs to the protein kinase superfamily. CAMK Ser/Thr protein kinase family. SNF1 subfamily. As to quaternary structure, interacts with CBL1, CBL2, CBL4/SOS3, CBL5, CBL9, CBL10 and with the protein phosphatase 2C ABI2. The cofactor is Mn(2+). Autophosphorylated.

The protein localises to the cytoplasm. The protein resides in the nucleus. It carries out the reaction L-seryl-[protein] + ATP = O-phospho-L-seryl-[protein] + ADP + H(+). It catalyses the reaction L-threonyl-[protein] + ATP = O-phospho-L-threonyl-[protein] + ADP + H(+). In terms of biological role, involved in the regulatory pathway for the control of intracellular Na(+) and K(+) homeostasis and salt tolerance. Activates the vacuolar H(+)/Ca(2+) antiporter CAX1 and operates in synergy with CBL4/SOS3 to activate the plasma membrane Na(+)/H(+) antiporter SOS1. CIPK serine-threonine protein kinases interact with CBL proteins. Binding of a CBL protein to the regulatory NAF domain of CIPK protein lead to the activation of the kinase in a calcium-dependent manner. Phosphorylates CBL1, CBL4 and CBL10. The sequence is that of CBL-interacting serine/threonine-protein kinase 24 (CIPK24) from Arabidopsis thaliana (Mouse-ear cress).